The primary structure comprises 396 residues: Elongation factor Tu (396 aa).

In terms of domain architecture, tr-type G spans 10-206 (KLHVNVGTIG…ALDTHIPNPE (197 aa)). The segment at 19–26 (GHVDHGKT) is G1. Position 19–26 (19–26 (GHVDHGKT)) interacts with GTP. Position 26 (Thr26) interacts with Mg(2+). Positions 60 to 64 (GITIS) are G2. The segment at 81–84 (DCPG) is G3. GTP-binding positions include 81–85 (DCPGH) and 136–139 (NKAD). The segment at 136–139 (NKAD) is G4. A G5 region spans residues 174-176 (SAL).

Belongs to the TRAFAC class translation factor GTPase superfamily. Classic translation factor GTPase family. EF-Tu/EF-1A subfamily. Monomer.

It is found in the cytoplasm. It catalyses the reaction GTP + H2O = GDP + phosphate + H(+). In terms of biological role, GTP hydrolase that promotes the GTP-dependent binding of aminoacyl-tRNA to the A-site of ribosomes during protein biosynthesis. The chain is Elongation factor Tu from Xylella fastidiosa (strain Temecula1 / ATCC 700964).